The following is a 151-amino-acid chain: Small ribosomal subunit protein uS13 (151 aa).

A disordered region spans residues 131 to 151 (RGQRTKSSFRRGRTVGVKKKQ). The segment covering 133 to 151 (QRTKSSFRRGRTVGVKKKQ) has biased composition (basic residues).

The protein belongs to the universal ribosomal protein uS13 family. As to quaternary structure, part of the 30S ribosomal subunit. Forms a loose heterodimer with protein S19. Forms two bridges to the 50S subunit in the 70S ribosome.

In terms of biological role, located at the top of the head of the 30S subunit, it contacts several helices of the 16S rRNA. In the 70S ribosome it contacts the 23S rRNA (bridge B1a) and protein L5 of the 50S subunit (bridge B1b), connecting the 2 subunits; these bridges are implicated in subunit movement. The chain is Small ribosomal subunit protein uS13 from Methanopyrus kandleri (strain AV19 / DSM 6324 / JCM 9639 / NBRC 100938).